Consider the following 361-residue polypeptide: tRNA-specific 2-thiouridylase MnmA (361 aa).

ATP contacts are provided by residues 6-13 and Ile32; that span reads LVSGGVDS. The tract at residues 93–95 is interaction with target base in tRNA; that stretch reads NPD. Cys98 (nucleophile) is an active-site residue. A disulfide bridge links Cys98 with Cys193. Gly121 contacts ATP. The interaction with tRNA stretch occupies residues 143-145; it reads KDQ. Cys193 acts as the Cysteine persulfide intermediate in catalysis.

It belongs to the MnmA/TRMU family.

The protein resides in the cytoplasm. It carries out the reaction S-sulfanyl-L-cysteinyl-[protein] + uridine(34) in tRNA + AH2 + ATP = 2-thiouridine(34) in tRNA + L-cysteinyl-[protein] + A + AMP + diphosphate + H(+). Functionally, catalyzes the 2-thiolation of uridine at the wobble position (U34) of tRNA, leading to the formation of s(2)U34. The sequence is that of tRNA-specific 2-thiouridylase MnmA from Porphyromonas gingivalis (strain ATCC BAA-308 / W83).